A 231-amino-acid polypeptide reads, in one-letter code: Phosphatidylserine decarboxylase proenzyme (231 aa).

Serine 188 functions as the Schiff-base intermediate with substrate; via pyruvic acid in the catalytic mechanism. Position 188 is a pyruvic acid (Ser); by autocatalysis (serine 188).

This sequence belongs to the phosphatidylserine decarboxylase family. PSD-A subfamily. As to quaternary structure, heterodimer of a large membrane-associated beta subunit and a small pyruvoyl-containing alpha subunit. Pyruvate is required as a cofactor. Is synthesized initially as an inactive proenzyme. Formation of the active enzyme involves a self-maturation process in which the active site pyruvoyl group is generated from an internal serine residue via an autocatalytic post-translational modification. Two non-identical subunits are generated from the proenzyme in this reaction, and the pyruvate is formed at the N-terminus of the alpha chain, which is derived from the carboxyl end of the proenzyme. The post-translation cleavage follows an unusual pathway, termed non-hydrolytic serinolysis, in which the side chain hydroxyl group of the serine supplies its oxygen atom to form the C-terminus of the beta chain, while the remainder of the serine residue undergoes an oxidative deamination to produce ammonia and the pyruvoyl prosthetic group on the alpha chain.

Its subcellular location is the cell membrane. It carries out the reaction a 1,2-diacyl-sn-glycero-3-phospho-L-serine + H(+) = a 1,2-diacyl-sn-glycero-3-phosphoethanolamine + CO2. The protein operates within phospholipid metabolism; phosphatidylethanolamine biosynthesis; phosphatidylethanolamine from CDP-diacylglycerol: step 2/2. Functionally, catalyzes the formation of phosphatidylethanolamine (PtdEtn) from phosphatidylserine (PtdSer). This chain is Phosphatidylserine decarboxylase proenzyme, found in Rickettsia akari (strain Hartford).